Reading from the N-terminus, the 89-residue chain is Small ribosomal subunit protein uS15 (89 aa).

Belongs to the universal ribosomal protein uS15 family. In terms of assembly, part of the 30S ribosomal subunit. Forms a bridge to the 50S subunit in the 70S ribosome, contacting the 23S rRNA.

Its function is as follows. One of the primary rRNA binding proteins, it binds directly to 16S rRNA where it helps nucleate assembly of the platform of the 30S subunit by binding and bridging several RNA helices of the 16S rRNA. In terms of biological role, forms an intersubunit bridge (bridge B4) with the 23S rRNA of the 50S subunit in the ribosome. In Leuconostoc citreum (strain KM20), this protein is Small ribosomal subunit protein uS15.